A 525-amino-acid chain; its full sequence is GMP synthase [glutamine-hydrolyzing] (525 aa).

One can recognise a Glutamine amidotransferase type-1 domain in the interval Pro-8–Glu-206. The active-site Nucleophile is Cys-85. Catalysis depends on residues His-180 and Glu-182. The region spanning Trp-207–Arg-400 is the GMPS ATP-PPase domain. Ser-234–Ser-240 contacts ATP.

As to quaternary structure, homodimer.

It catalyses the reaction XMP + L-glutamine + ATP + H2O = GMP + L-glutamate + AMP + diphosphate + 2 H(+). Its pathway is purine metabolism; GMP biosynthesis; GMP from XMP (L-Gln route): step 1/1. In terms of biological role, catalyzes the synthesis of GMP from XMP. The sequence is that of GMP synthase [glutamine-hydrolyzing] from Legionella pneumophila (strain Corby).